The sequence spans 241 residues: Glutathione S-transferase theta-3 (241 aa).

Residues 2–82 enclose the GST N-terminal domain; that stretch reads GLELYLDLMS…YLSRKYKAPD (81 aa). Residues 53–54 and 66–67 each bind glutathione; these read KV and ES. Residues 88–222 form the GST C-terminal domain; it reads DLQTRARVDE…VVLKAKDMPP (135 aa).

The protein belongs to the GST superfamily. Theta family. As to quaternary structure, homodimer. As to expression, expressed strongly in liver, and at lower levels in kidney and testis.

Its subcellular location is the cytoplasm. The enzyme catalyses RX + glutathione = an S-substituted glutathione + a halide anion + H(+). Functionally, conjugation of reduced glutathione to a wide number of exogenous and endogenous hydrophobic electrophiles. Shows high activity towards 4-nitrobenzyl chloride (4-NBC). Also has lower activity towards 1,2-epoxy-3-(p-nitrophenoxy)propane (EPNP), cumene hydroperoxide, 1-chloro-2,4-dinitrobenzene (CDNB), 7-chloro-4-nitrobenzo-2-oxa-1,3-diazole (NBD-Cl), and ethacrynic acid. The sequence is that of Glutathione S-transferase theta-3 from Mus musculus (Mouse).